The chain runs to 464 residues: UPF0210 protein MA_1691 (464 aa).

Belongs to the UPF0210 family.

The sequence is that of UPF0210 protein MA_1691 from Methanosarcina acetivorans (strain ATCC 35395 / DSM 2834 / JCM 12185 / C2A).